A 189-amino-acid chain; its full sequence is Elongation factor P (189 aa).

It belongs to the elongation factor P family.

The protein localises to the cytoplasm. Its pathway is protein biosynthesis; polypeptide chain elongation. In terms of biological role, involved in peptide bond synthesis. Stimulates efficient translation and peptide-bond synthesis on native or reconstituted 70S ribosomes in vitro. Probably functions indirectly by altering the affinity of the ribosome for aminoacyl-tRNA, thus increasing their reactivity as acceptors for peptidyl transferase. The chain is Elongation factor P from Chloroflexus aurantiacus (strain ATCC 29364 / DSM 637 / Y-400-fl).